The following is a 249-amino-acid chain: Sulfate transporter CysZ (249 aa).

4 consecutive transmembrane segments (helical) span residues 26–46, 71–91, 150–170, and 206–226; these read LFVL…IYFA, VIWP…FTML, LFIL…WLLF, and LGFG…ILMM.

This sequence belongs to the CysZ family.

The protein localises to the cell inner membrane. High affinity, high specificity proton-dependent sulfate transporter, which mediates sulfate uptake. Provides the sulfur source for the cysteine synthesis pathway. In Pseudomonas fluorescens (strain ATCC BAA-477 / NRRL B-23932 / Pf-5), this protein is Sulfate transporter CysZ.